The sequence spans 107 residues: Phosphoribosyl-ATP pyrophosphatase (107 aa).

It belongs to the PRA-PH family.

Its subcellular location is the cytoplasm. It catalyses the reaction 1-(5-phospho-beta-D-ribosyl)-ATP + H2O = 1-(5-phospho-beta-D-ribosyl)-5'-AMP + diphosphate + H(+). It participates in amino-acid biosynthesis; L-histidine biosynthesis; L-histidine from 5-phospho-alpha-D-ribose 1-diphosphate: step 2/9. In Agrobacterium fabrum (strain C58 / ATCC 33970) (Agrobacterium tumefaciens (strain C58)), this protein is Phosphoribosyl-ATP pyrophosphatase (hisE).